Consider the following 427-residue polypeptide: Transcription termination factor Rho (427 aa).

The region spanning 55-130 is the Rho RNA-BD domain; sequence YFFGEGVLEI…IKIEAINYRP (76 aa). ATP is bound by residues 173 to 178, 185 to 190, and Arg-216; these read GKGQRG and KAGKTT.

It belongs to the Rho family. Homohexamer. The homohexamer assembles into an open ring structure.

Its function is as follows. Facilitates transcription termination by a mechanism that involves Rho binding to the nascent RNA, activation of Rho's RNA-dependent ATPase activity, and release of the mRNA from the DNA template. The sequence is that of Transcription termination factor Rho from Thermotoga maritima (strain ATCC 43589 / DSM 3109 / JCM 10099 / NBRC 100826 / MSB8).